A 1068-amino-acid polypeptide reads, in one-letter code: Receptor-like protein 13 (1068 aa).

Residues 1–23 (MEGKLFLGQYLICVILLLGQLHG) form the signal peptide. Over 24-986 (YKSCIEKERK…EADESTVDME (963 aa)) the chain is Extracellular. N-linked (GlcNAc...) asparagine glycans are attached at residues Asn-59 and Asn-97. 19 LRR repeats span residues 104–129 (FEDV…LFDD), 139–162 (LRNL…FLNA), 164–187 (TSLT…EFKD), 188–212 (LTNL…DYNS), 216–239 (FRKL…FLNS), 241–264 (TSLK…ELRD), 265–290 (LTNV…LFAL), 292–315 (KLKA…KFAK), 325–349 (WKNM…LTSL), 350–373 (TGLR…LANL), 375–397 (SLEY…LLAN), 398–423 (LSKL…SWKP), 424–447 (KFQL…LLHQ), 448–471 (KDLH…LLEN), 472–497 (NTKL…AHNL), 499–517 (FLNV…NFGW), 519–543 (LPHL…LDNM), 544–567 (KSIE…FLKG), and 569–594 (YNLT…NFTR). Asn-153 is a glycosylation site (N-linked (GlcNAc...) asparagine). An N-linked (GlcNAc...) asparagine glycan is attached at Asn-202. Asn-279 is a glycosylation site (N-linked (GlcNAc...) asparagine). Asn-397 carries N-linked (GlcNAc...) asparagine glycosylation. Residues Asn-471, Asn-482, and Asn-501 are each glycosylated (N-linked (GlcNAc...) asparagine). N-linked (GlcNAc...) asparagine glycosylation is found at Asn-570 and Asn-591. An LRR 20; degenerate repeat occupies 596-615 (WVMSMDNNLFTGNIGKGFRS). 5 LRR repeats span residues 616-639 (LPSL…WIGE), 641-664 (QGLF…LFNI), 665-688 (SYLQ…VSSI), 690-710 (HGAV…DTLL), and 711-734 (LNVI…INTQ). Asn-663 carries N-linked (GlcNAc...) asparagine glycosylation. N-linked (GlcNAc...) asparagine glycosylation is present at Asn-700. N-linked (GlcNAc...) asparagine glycans are attached at residues Asn-735, Asn-745, Asn-771, Asn-780, and Asn-822. LRR repeat units lie at residues 736–757 (ISIL…FCSL) and 758–781 (SNIQ…LSNT). 4 LRR repeats span residues 846–870 (LKLL…LGGL), 871–893 (VELE…SFSG), 895–918 (KNVE…LTDM), and 920–943 (SLAV…QFNT). Residues Asn-877 and Asn-882 are each glycosylated (N-linked (GlcNAc...) asparagine). Residues Asn-925 and Asn-930 are each glycosylated (N-linked (GlcNAc...) asparagine). Residues 987–1007 (SFYWSFVAAYVTILLGILASL) traverse the membrane as a helical segment. Over 1008–1068 (SFDSPWSRAW…PPALFHKTRT (61 aa)) the chain is Cytoplasmic.

The protein belongs to the RLP family.

It is found in the cell membrane. This Arabidopsis thaliana (Mouse-ear cress) protein is Receptor-like protein 13.